A 213-amino-acid polypeptide reads, in one-letter code: Nicotinate-nucleotide adenylyltransferase (213 aa).

It belongs to the NadD family.

The catalysed reaction is nicotinate beta-D-ribonucleotide + ATP + H(+) = deamido-NAD(+) + diphosphate. It functions in the pathway cofactor biosynthesis; NAD(+) biosynthesis; deamido-NAD(+) from nicotinate D-ribonucleotide: step 1/1. Catalyzes the reversible adenylation of nicotinate mononucleotide (NaMN) to nicotinic acid adenine dinucleotide (NaAD). The polypeptide is Nicotinate-nucleotide adenylyltransferase (Salmonella typhimurium (strain LT2 / SGSC1412 / ATCC 700720)).